A 1502-amino-acid polypeptide reads, in one-letter code: DNA-directed RNA polymerase subunit beta' (1502 aa).

Residues cysteine 60, cysteine 62, cysteine 75, and cysteine 78 each coordinate Zn(2+). Positions 265-293 are disordered; sequence RKQRDLEDAEQLTGAERERKEYEASQERE. The span at 279-293 shows a compositional bias: basic and acidic residues; that stretch reads AERERKEYEASQERE. The Mg(2+) site is built by aspartate 626, aspartate 628, and aspartate 630. Cysteine 1002, cysteine 1075, cysteine 1082, and cysteine 1085 together coordinate Zn(2+). Residues 1472–1502 form a disordered region; sequence SDDNGDEVGKNGEFADETPFTGDSDDRDNEI.

The protein belongs to the RNA polymerase beta' chain family. In terms of assembly, the RNAP catalytic core consists of 2 alpha, 1 beta, 1 beta' and 1 omega subunit. When a sigma factor is associated with the core the holoenzyme is formed, which can initiate transcription. The cofactor is Mg(2+). It depends on Zn(2+) as a cofactor.

It catalyses the reaction RNA(n) + a ribonucleoside 5'-triphosphate = RNA(n+1) + diphosphate. Functionally, DNA-dependent RNA polymerase catalyzes the transcription of DNA into RNA using the four ribonucleoside triphosphates as substrates. This is DNA-directed RNA polymerase subunit beta' from Roseiflexus castenholzii (strain DSM 13941 / HLO8).